A 409-amino-acid polypeptide reads, in one-letter code: Putative competence-damage inducible protein (409 aa).

This sequence belongs to the CinA family.

The protein is Putative competence-damage inducible protein of Clostridium botulinum (strain ATCC 19397 / Type A).